The following is a 336-amino-acid chain: Phosphate acyltransferase (336 aa).

This sequence belongs to the PlsX family. Homodimer. Probably interacts with PlsY.

The protein localises to the cytoplasm. The catalysed reaction is a fatty acyl-[ACP] + phosphate = an acyl phosphate + holo-[ACP]. It functions in the pathway lipid metabolism; phospholipid metabolism. Functionally, catalyzes the reversible formation of acyl-phosphate (acyl-PO(4)) from acyl-[acyl-carrier-protein] (acyl-ACP). This enzyme utilizes acyl-ACP as fatty acyl donor, but not acyl-CoA. The protein is Phosphate acyltransferase of Pseudomonas fluorescens (strain Pf0-1).